Consider the following 304-residue polypeptide: Bacteriochlorophyll synthase 33 kDa chain (304 aa).

Transmembrane regions (helical) follow at residues 26–46 (VTWF…NVPI), 51–71 (GVVV…SQAA), 94–114 (IPGL…LVVG), 117–137 (LGSW…AYSV), 151–171 (GLVG…VLLA), 178–198 (GFPI…IMTI), 227–247 (IACT…YLFS), 250–270 (YHAT…SVWM), and 279–299 (WYNG…AFAI).

Its subcellular location is the cell membrane. It functions in the pathway porphyrin-containing compound metabolism; bacteriochlorophyll biosynthesis (light-independent). Its function is as follows. Catalyzes the esterification of bacteriochlorophyllide a by geranylgeraniol-PPi. In Rhodobacter capsulatus (strain ATCC BAA-309 / NBRC 16581 / SB1003), this protein is Bacteriochlorophyll synthase 33 kDa chain (bchG).